Consider the following 443-residue polypeptide: Proline--tRNA ligase (443 aa).

This sequence belongs to the class-II aminoacyl-tRNA synthetase family. ProS type 2 subfamily. As to quaternary structure, homodimer.

The protein resides in the cytoplasm. The catalysed reaction is tRNA(Pro) + L-proline + ATP = L-prolyl-tRNA(Pro) + AMP + diphosphate. Functionally, catalyzes the attachment of proline to tRNA(Pro) in a two-step reaction: proline is first activated by ATP to form Pro-AMP and then transferred to the acceptor end of tRNA(Pro). The sequence is that of Proline--tRNA ligase from Methylobacterium nodulans (strain LMG 21967 / CNCM I-2342 / ORS 2060).